A 519-amino-acid chain; its full sequence is Chloroethene reductive dehalogenase (519 aa).

A signal peptide (tat-type signal) is located at residues 1 to 43; it reads MSKFHKTISRRDFMKGLGLAGAGIGAVAASAPVFHDIDELVSS. 4Fe-4S ferredoxin-type domains are found at residues 388 to 420 and 435 to 465; these read PTPP…QEDE and LGYR…LENA. Residues Cys400, Cys403, Cys406, Cys410, Cys444, Cys448, Cys451, and Cys455 each coordinate [4Fe-4S] cluster.

Belongs to the PceA family. It depends on [4Fe-4S] cluster as a cofactor. The cofactor is corrinoid. In terms of processing, predicted to be exported by the Tat system. The position of the signal peptide cleavage has been experimentally proven.

It is found in the cell membrane. The catalysed reaction is chloroethene + AH2 = ethene + chloride + A + H(+). It catalyses the reaction (Z)-1,2-dichloroethene + AH2 = chloroethene + chloride + A + H(+). The enzyme catalyses 1,1-dichloroethene + AH2 = chloroethene + chloride + A + H(+). Functionally, catalyzes the reductive dechlorination of chloroethene (or vinyl chloride, VC) to ethene. Can also reduce all dichloroethene (DCE) isomers, but not tetrachloroethene (PCE) or trichloroethene (TCE), at high rates. Reduced methyl viologen can act as the artificial electron donor. The polypeptide is Chloroethene reductive dehalogenase (Dehalococcoides mccartyi (strain VS)).